The following is a 157-amino-acid chain: Transcription factor HES-2 (157 aa).

The region spanning Leu13 to Gln70 is the bHLH domain. The Orange domain maps to Tyr86 to Leu119. Residues Val124 to Trp157 form a disordered region. Residues Ser125–Pro139 show a composition bias toward low complexity. Residues Ala140–Ser149 are compositionally biased toward pro residues. A WRPW motif motif is present at residues Trp154–Trp157.

Transcription repression requires formation of a complex with a corepressor protein of the Groucho/TLE family.

It is found in the nucleus. Functionally, transcriptional repressor of genes that require a bHLH protein for their transcription. This is Transcription factor HES-2 (Hes2) from Rattus norvegicus (Rat).